The chain runs to 284 residues: Bifunctional protein FolD (284 aa).

Residues Gly-166–Ser-168 and Ile-232 contribute to the NADP(+) site.

The protein belongs to the tetrahydrofolate dehydrogenase/cyclohydrolase family. In terms of assembly, homodimer.

The enzyme catalyses (6R)-5,10-methylene-5,6,7,8-tetrahydrofolate + NADP(+) = (6R)-5,10-methenyltetrahydrofolate + NADPH. The catalysed reaction is (6R)-5,10-methenyltetrahydrofolate + H2O = (6R)-10-formyltetrahydrofolate + H(+). It participates in one-carbon metabolism; tetrahydrofolate interconversion. Its function is as follows. Catalyzes the oxidation of 5,10-methylenetetrahydrofolate to 5,10-methenyltetrahydrofolate and then the hydrolysis of 5,10-methenyltetrahydrofolate to 10-formyltetrahydrofolate. The sequence is that of Bifunctional protein FolD from Shewanella baltica (strain OS223).